Consider the following 411-residue polypeptide: MIQVLLVTLCLAAFPYQGSSIILESGNVNDYEVVYPRKVTPVPRGAVQPKYEDAMQYEFKVNGEPVVLHLEKNKGLFSEDYSETHYSPDGREITTYPLVEDHCYYHGRIENDADSTASISACNGLKGHFKLQGEMYLIEPLELSDSEAHAVYKYENVEKEDEAPKMCGVTQNWESYEPIKKAFQLNLTPEQQGFPQRYVELVIVADHRMNTKYNGDSDKIRQWVHQIVNTINEIYRPLNIRFALVGLEIWSNQDLITVTSVSHDTLASFGNWRETDLLRRQRHDNAQLLTAIDFDGDTVGLAYVGGMCQLKHSTGVIQDHSAINLLVALTMAHELGHNLGMNHDGNQCHCGANSCVMPSVLSDQPSKLFSDCSKKDYQTFLPVNNPQCILNKPLRTDTASTPVSGNELLEA.

An N-terminal signal peptide occupies residues 1 to 20 (MIQVLLVTLCLAAFPYQGSS). Positions 21-189 (IILESGNVND…KKAFQLNLTP (169 aa)) are excised as a propeptide. In terms of domain architecture, Peptidase M12B spans 197-393 (RYVELVIVAD…NNPQCILNKP (197 aa)). Residues Glu200 and Asp284 each contribute to the Ca(2+) site. Disulfide bonds link Cys308-Cys388, Cys348-Cys372, and Cys350-Cys355. His333 is a binding site for Zn(2+). Residue Glu334 is part of the active site. Zn(2+)-binding residues include His337 and His343. Residues Cys388, Asn391, Val403, Asn406, Leu408, and Glu410 each coordinate Ca(2+).

Belongs to the venom metalloproteinase (M12B) family. P-I subfamily. As to quaternary structure, monomer. Requires Zn(2+) as cofactor. Expressed by the venom gland.

Its subcellular location is the secreted. Its activity is regulated as follows. Inhibited by EDTA and 1,10-phenanthroline, but not by PMSF. Functionally, snake venom zinc metalloprotease that has fibrinolytic activity. The recombinant enzyme cleaves both alpha- and beta-chains of fibrinogen, but not the gamma-chain. The recombinant protein does not produce hemorrhage in mice. Cleaves the peptide substrate Abz-LVEALYQ-EDDnp at the Ala-Leu bond in vitro. This Agkistrodon contortrix laticinctus (Broad-banded copperhead) protein is Snake venom metalloproteinase ACLF (ACLPREF).